Consider the following 452-residue polypeptide: Exodeoxyribonuclease 7 large subunit (452 aa).

It belongs to the XseA family. In terms of assembly, heterooligomer composed of large and small subunits.

It localises to the cytoplasm. The enzyme catalyses Exonucleolytic cleavage in either 5'- to 3'- or 3'- to 5'-direction to yield nucleoside 5'-phosphates.. Functionally, bidirectionally degrades single-stranded DNA into large acid-insoluble oligonucleotides, which are then degraded further into small acid-soluble oligonucleotides. In Bordetella avium (strain 197N), this protein is Exodeoxyribonuclease 7 large subunit.